We begin with the raw amino-acid sequence, 156 residues long: Adult-specific rigid cuticular protein 15.5 (156 aa).

Positions 23–84 (IGNYAFNYGT…SVKTNEPGTA (62 aa)) constitute a Chitin-binding type R&amp;R domain.

Its function is as follows. Component of the rigid cuticle of the spider. The protein is Adult-specific rigid cuticular protein 15.5 of Araneus diadematus (European garden spider).